Reading from the N-terminus, the 96-residue chain is Aspartyl/glutamyl-tRNA(Asn/Gln) amidotransferase subunit C (96 aa).

This sequence belongs to the GatC family. Heterotrimer of A, B and C subunits.

It carries out the reaction L-glutamyl-tRNA(Gln) + L-glutamine + ATP + H2O = L-glutaminyl-tRNA(Gln) + L-glutamate + ADP + phosphate + H(+). The catalysed reaction is L-aspartyl-tRNA(Asn) + L-glutamine + ATP + H2O = L-asparaginyl-tRNA(Asn) + L-glutamate + ADP + phosphate + 2 H(+). Its function is as follows. Allows the formation of correctly charged Asn-tRNA(Asn) or Gln-tRNA(Gln) through the transamidation of misacylated Asp-tRNA(Asn) or Glu-tRNA(Gln) in organisms which lack either or both of asparaginyl-tRNA or glutaminyl-tRNA synthetases. The reaction takes place in the presence of glutamine and ATP through an activated phospho-Asp-tRNA(Asn) or phospho-Glu-tRNA(Gln). The polypeptide is Aspartyl/glutamyl-tRNA(Asn/Gln) amidotransferase subunit C (Leptospira interrogans serogroup Icterohaemorrhagiae serovar copenhageni (strain Fiocruz L1-130)).